The following is a 121-amino-acid chain: MARIAGVDVPREKRIVISLTYIYGIGKQTAKEVLAEAGVSEDTRTRDLTEEELGKIREILDRIKVEGDLRREVNLNIKRLIEIGSYRGMRHRRGLPVRGQNTKNNARTRKGPSKTVAGKKK.

Residues 91–121 form a disordered region; sequence HRRGLPVRGQNTKNNARTRKGPSKTVAGKKK. The segment covering 106 to 121 has biased composition (basic residues); that stretch reads ARTRKGPSKTVAGKKK.

It belongs to the universal ribosomal protein uS13 family. As to quaternary structure, part of the 30S ribosomal subunit. Forms a loose heterodimer with protein S19. Forms two bridges to the 50S subunit in the 70S ribosome.

Functionally, located at the top of the head of the 30S subunit, it contacts several helices of the 16S rRNA. In the 70S ribosome it contacts the 23S rRNA (bridge B1a) and protein L5 of the 50S subunit (bridge B1b), connecting the 2 subunits; these bridges are implicated in subunit movement. Contacts the tRNAs in the A and P-sites. In Listeria monocytogenes serotype 4b (strain CLIP80459), this protein is Small ribosomal subunit protein uS13.